We begin with the raw amino-acid sequence, 327 residues long: MATRIEFHKHGGPEVLQTVEFTPAEPAEHEIQVENKAIGINFIDTYIRSGLYPPPSLPAGLGTEAAGVVSKVGNGVEHIRVGDRVVYAQSTLGAYSSVHNVTADKAAILPDAISFEQAAASFLKGLTVFYLLRKTYEVKPDEPFLFHAAAGGVGLIACQWAKALGAKLIGTVGSAQKAQRALDAGAWQVINYREESIVERVKEITGGKKVRVVYDSVGKDTWEASLDCLQRRGLMVSFGNASGPVTGVNLGILNQKGSLYATRPSLQGYITTREELTEASNELFSLIASGVIKVDVAENQRYALKDARRAHEVLESRATQGSSLLIP.

Belongs to the zinc-containing alcohol dehydrogenase family. Quinone oxidoreductase subfamily. Homodimer.

The catalysed reaction is 2 a quinone + NADPH + H(+) = 2 a 1,4-benzosemiquinone + NADP(+). The sequence is that of Quinone oxidoreductase (qor) from Salmonella typhimurium (strain LT2 / SGSC1412 / ATCC 700720).